The chain runs to 218 residues: UPF0319 protein swp_2242 (218 aa).

A signal peptide spans 1–21 (MRLSQSVLTALLICVNSAAFA).

The protein belongs to the UPF0319 family.

This chain is UPF0319 protein swp_2242, found in Shewanella piezotolerans (strain WP3 / JCM 13877).